Here is a 429-residue protein sequence, read N- to C-terminus: Enolase (429 aa).

Q163 is a binding site for (2R)-2-phosphoglycerate. E205 serves as the catalytic Proton donor. Residues D242, E287, and D314 each coordinate Mg(2+). The (2R)-2-phosphoglycerate site is built by K339, R368, S369, and K390. K339 acts as the Proton acceptor in catalysis.

This sequence belongs to the enolase family. It depends on Mg(2+) as a cofactor.

The protein localises to the cytoplasm. The protein resides in the secreted. It is found in the cell surface. It catalyses the reaction (2R)-2-phosphoglycerate = phosphoenolpyruvate + H2O. The protein operates within carbohydrate degradation; glycolysis; pyruvate from D-glyceraldehyde 3-phosphate: step 4/5. Catalyzes the reversible conversion of 2-phosphoglycerate (2-PG) into phosphoenolpyruvate (PEP). It is essential for the degradation of carbohydrates via glycolysis. This chain is Enolase, found in Cupriavidus pinatubonensis (strain JMP 134 / LMG 1197) (Cupriavidus necator (strain JMP 134)).